A 152-amino-acid polypeptide reads, in one-letter code: MSNKFVITWDNMQMYTRQLAEKLLPADQWKGIIAVSRGGLVPAAILARELNIRHVDTVCISSYDHDHQREMKVLKQADGDGEGFIVIDDLVDTGGTAELIRAMYPKAKFVTVCAKPAGKHFIDDYVVDIAQDTWIEQPWDMAVTFVDPISKK.

Residues 37–38 (RG), Arg-69, and 88–96 (DDLVDTGGT) contribute to the 5-phospho-alpha-D-ribose 1-diphosphate site. Arg-69 serves as a coordination point for GMP. Asp-89 contacts Mg(2+). The guanine site is built by Asp-92 and Ile-135. 2 residues coordinate xanthine: Asp-92 and Ile-135. GMP is bound by residues 92–96 (DTGGT) and 134–135 (WI).

It belongs to the purine/pyrimidine phosphoribosyltransferase family. XGPT subfamily. Homotetramer. The cofactor is Mg(2+).

The protein localises to the cell inner membrane. It catalyses the reaction GMP + diphosphate = guanine + 5-phospho-alpha-D-ribose 1-diphosphate. The catalysed reaction is XMP + diphosphate = xanthine + 5-phospho-alpha-D-ribose 1-diphosphate. It carries out the reaction IMP + diphosphate = hypoxanthine + 5-phospho-alpha-D-ribose 1-diphosphate. Its pathway is purine metabolism; GMP biosynthesis via salvage pathway; GMP from guanine: step 1/1. It functions in the pathway purine metabolism; XMP biosynthesis via salvage pathway; XMP from xanthine: step 1/1. Purine salvage pathway enzyme that catalyzes the transfer of the ribosyl-5-phosphate group from 5-phospho-alpha-D-ribose 1-diphosphate (PRPP) to the N9 position of the 6-oxopurines guanine and xanthine to form the corresponding ribonucleotides GMP (guanosine 5'-monophosphate) and XMP (xanthosine 5'-monophosphate), with the release of PPi. To a lesser extent, also acts on hypoxanthine. In Photobacterium profundum (strain SS9), this protein is Xanthine-guanine phosphoribosyltransferase.